A 1417-amino-acid polypeptide reads, in one-letter code: Non-structural polyprotein 1AB (1417 aa).

Residues 105 to 143 (KLIHKANALQERLRLSQEEKATLALDVQFLQHENVRLKE) are a coiled coil. Helical transmembrane passes span 155–175 (MKWI…GGYA), 240–260 (VFYY…LAIG), 287–307 (VLPT…TLMV), 314–334 (LLAI…LCFM), and 345–365 (GLIA…LTGT). Active-site charge relay system; for serine protease activity residues include His-462, Asp-490, and Ser-552. The stretch at 588–615 (VKAPSQVELLKEEIERLKAQLNSAAENP) forms a coiled coil. Position 694 is an O-(5'-phospho-RNA)-tyrosine (Tyr-694). The tract at residues 753-813 (NFDQAKPTPA…QKIEPQPYSQ (61 aa)) is disordered. Residues 784 to 796 (SQKKEKQPEHEQQ) are compositionally biased toward basic and acidic residues. Positions 1162–1288 (KHFIEFDWTR…TTPSVPDNYE (127 aa)) constitute a RdRp catalytic domain.

It belongs to the astroviridae polyprotein 1AB family. In terms of assembly, monomer. Post-translationally, cleaved by the viral and host proteases. The protease is probably autocatalytically cleaved.

The protein resides in the host membrane. The catalysed reaction is RNA(n) + a ribonucleoside 5'-triphosphate = RNA(n+1) + diphosphate. Responsible for the cleavage of the polyprotein into functional products. Its function is as follows. Protein covalently attached to the 5' extremity of the genomic and subgenomic RNAs. It may serve as a primer for the replicase. This Human astrovirus-8 (HAstV-8) protein is Non-structural polyprotein 1AB (ORF1).